The chain runs to 179 residues: Casparian strip membrane protein 1 (179 aa).

Residues 1–17 (MKAGPLQLGVVPPANRA) are Cytoplasmic-facing. A helical transmembrane segment spans residues 18–38 (IAILDFFLRPIAIVGTLASAI). Residues 39–67 (AMATTNQTLPFFSQFIRFRAKFNDLPSFT) lie on the Extracellular side of the membrane. An N-linked (GlcNAc...) asparagine glycan is attached at asparagine 44. A helical membrane pass occupies residues 68–88 (FFVVASSIVSAYLILSLGFSI). Residues 89–100 (LHIAKSNLVNSR) lie on the Cytoplasmic side of the membrane. The helical transmembrane segment at 101-121 (VLLLLLDTAAMGLLMAGSAAA) threads the bilayer. Topologically, residues 122–154 (TAIVQLAHKGNNKVNWFAICQQYNSFCKRVSGS) are extracellular. Residues 155–175 (LIGSYAGVVVLILLILLSGVA) traverse the membrane as a helical segment. The Cytoplasmic portion of the chain corresponds to 176–179 (LSRR).

Belongs to the Casparian strip membrane proteins (CASP) family. In terms of assembly, homodimer and heterodimers.

The protein localises to the cell membrane. Functionally, regulates membrane-cell wall junctions and localized cell wall deposition. Required for establishment of the Casparian strip membrane domain (CSD) and the subsequent formation of Casparian strips, a cell wall modification of the root endodermis that determines an apoplastic barrier between the intraorganismal apoplasm and the extraorganismal apoplasm and prevents lateral diffusion. The chain is Casparian strip membrane protein 1 from Lactuca sativa (Garden lettuce).